We begin with the raw amino-acid sequence, 151 residues long: Ribosome maturation factor RimP (151 aa).

It belongs to the RimP family.

Its subcellular location is the cytoplasm. Required for maturation of 30S ribosomal subunits. This is Ribosome maturation factor RimP from Colwellia psychrerythraea (strain 34H / ATCC BAA-681) (Vibrio psychroerythus).